A 493-amino-acid chain; its full sequence is Transcript termination protein A18 (493 aa).

One can recognise a Helicase ATP-binding domain in the interval 100 to 256 (MIESKRPLYI…NSIINIAKLS (157 aa)). Position 113 to 120 (113 to 120 (LACGFGKT)) interacts with ATP. Residues 206 to 209 (DESH) carry the DESH box motif.

This sequence belongs to the helicase family. Poxviruses subfamily. As to quaternary structure, interacts with G2. Might be part of a transcription complex composed at least of G2, A18, and H5.

Its subcellular location is the virion. In terms of biological role, DNA helicase which seems to act as a postreplicative transcription termination factor. Involved in ATP-dependent release of nascent RNA. Forms a stable complex with single-stranded DNA, and to a lesser extent RNA. This chain is Transcript termination protein A18, found in Rabbitpox virus (strain Utrecht) (RPV).